The sequence spans 355 residues: 3-isopropylmalate dehydrogenase (355 aa).

Position 77–90 (77–90 (GAKWDNLPREKRPE)) interacts with NAD(+). Residues Arg97, Arg107, Arg135, and Asp220 each coordinate substrate. Positions 220, 244, and 248 each coordinate Mg(2+). 277–289 (GSAPDIAGQGIAN) contacts NAD(+).

Belongs to the isocitrate and isopropylmalate dehydrogenases family. LeuB type 1 subfamily. As to quaternary structure, homodimer. Requires Mg(2+) as cofactor. Mn(2+) serves as cofactor.

The protein localises to the cytoplasm. The catalysed reaction is (2R,3S)-3-isopropylmalate + NAD(+) = 4-methyl-2-oxopentanoate + CO2 + NADH. It participates in amino-acid biosynthesis; L-leucine biosynthesis; L-leucine from 3-methyl-2-oxobutanoate: step 3/4. In terms of biological role, catalyzes the oxidation of 3-carboxy-2-hydroxy-4-methylpentanoate (3-isopropylmalate) to 3-carboxy-4-methyl-2-oxopentanoate. The product decarboxylates to 4-methyl-2 oxopentanoate. In Sulfurimonas denitrificans (strain ATCC 33889 / DSM 1251) (Thiomicrospira denitrificans (strain ATCC 33889 / DSM 1251)), this protein is 3-isopropylmalate dehydrogenase.